A 311-amino-acid polypeptide reads, in one-letter code: tRNA-cytidine(32) 2-sulfurtransferase (311 aa).

Positions 58-63 (SGGKDS) match the PP-loop motif motif. [4Fe-4S] cluster contacts are provided by cysteine 133, cysteine 136, and cysteine 224.

It belongs to the TtcA family. Homodimer. Requires Mg(2+) as cofactor. The cofactor is [4Fe-4S] cluster.

It localises to the cytoplasm. The enzyme catalyses cytidine(32) in tRNA + S-sulfanyl-L-cysteinyl-[cysteine desulfurase] + AH2 + ATP = 2-thiocytidine(32) in tRNA + L-cysteinyl-[cysteine desulfurase] + A + AMP + diphosphate + H(+). It functions in the pathway tRNA modification. Its function is as follows. Catalyzes the ATP-dependent 2-thiolation of cytidine in position 32 of tRNA, to form 2-thiocytidine (s(2)C32). The sulfur atoms are provided by the cysteine/cysteine desulfurase (IscS) system. The sequence is that of tRNA-cytidine(32) 2-sulfurtransferase from Polaromonas sp. (strain JS666 / ATCC BAA-500).